Here is a 264-residue protein sequence, read N- to C-terminus: Small ribosomal subunit protein eS1 (264 aa).

The interval 233–264 (GEGGGAGKPAGDETGAKVERADGYEPPVQESV) is disordered. The segment covering 242–255 (AGDETGAKVERADG) has biased composition (basic and acidic residues).

This sequence belongs to the eukaryotic ribosomal protein eS1 family. Component of the small ribosomal subunit. Mature ribosomes consist of a small (40S) and a large (60S) subunit. The 40S subunit contains about 33 different proteins and 1 molecule of RNA (18S). The 60S subunit contains about 49 different proteins and 3 molecules of RNA (28S, 5.8S and 5S). Part of the small subunit (SSU) processome, composed of more than 70 proteins and the RNA chaperone small nucleolar RNA (snoRNA) U3.

Its subcellular location is the cytoplasm. It is found in the nucleus. The protein resides in the nucleolus. Functionally, component of the small ribosomal subunit. The ribosome is a large ribonucleoprotein complex responsible for the synthesis of proteins in the cell. Part of the small subunit (SSU) processome, first precursor of the small eukaryotic ribosomal subunit. During the assembly of the SSU processome in the nucleolus, many ribosome biogenesis factors, an RNA chaperone and ribosomal proteins associate with the nascent pre-rRNA and work in concert to generate RNA folding, modifications, rearrangements and cleavage as well as targeted degradation of pre-ribosomal RNA by the RNA exosome. May play a role during erythropoiesis. This is Small ribosomal subunit protein eS1 (rps3a) from Xenopus tropicalis (Western clawed frog).